Reading from the N-terminus, the 604-residue chain is UvrABC system protein C (604 aa).

Residues 17 to 95 (AQPGVYRMLN…IKSLAPRYNI (79 aa)) form the GIY-YIG domain. One can recognise a UVR domain in the interval 204-239 (DEVLKTIEQKMFTASDQQDYEQAAQLRDQMQALRKI).

The protein belongs to the UvrC family. Interacts with UvrB in an incision complex.

Its subcellular location is the cytoplasm. Its function is as follows. The UvrABC repair system catalyzes the recognition and processing of DNA lesions. UvrC both incises the 5' and 3' sides of the lesion. The N-terminal half is responsible for the 3' incision and the C-terminal half is responsible for the 5' incision. This is UvrABC system protein C from Nitrosomonas europaea (strain ATCC 19718 / CIP 103999 / KCTC 2705 / NBRC 14298).